A 259-amino-acid chain; its full sequence is Phosphate import ATP-binding protein PstB (259 aa).

The region spanning isoleucine 13 to isoleucine 254 is the ABC transporter domain. An ATP-binding site is contributed by glycine 45 to serine 52.

Belongs to the ABC transporter superfamily. Phosphate importer (TC 3.A.1.7) family. In terms of assembly, the complex is composed of two ATP-binding proteins (PstB), two transmembrane proteins (PstC and PstA) and a solute-binding protein (PstS).

Its subcellular location is the cell inner membrane. The catalysed reaction is phosphate(out) + ATP + H2O = ADP + 2 phosphate(in) + H(+). Its function is as follows. Part of the ABC transporter complex PstSACB involved in phosphate import. Responsible for energy coupling to the transport system. This chain is Phosphate import ATP-binding protein PstB, found in Edwardsiella tarda.